We begin with the raw amino-acid sequence, 95 residues long: Aspartyl/glutamyl-tRNA(Asn/Gln) amidotransferase subunit C (95 aa).

Belongs to the GatC family. As to quaternary structure, heterotrimer of A, B and C subunits.

The enzyme catalyses L-glutamyl-tRNA(Gln) + L-glutamine + ATP + H2O = L-glutaminyl-tRNA(Gln) + L-glutamate + ADP + phosphate + H(+). It carries out the reaction L-aspartyl-tRNA(Asn) + L-glutamine + ATP + H2O = L-asparaginyl-tRNA(Asn) + L-glutamate + ADP + phosphate + 2 H(+). In terms of biological role, allows the formation of correctly charged Asn-tRNA(Asn) or Gln-tRNA(Gln) through the transamidation of misacylated Asp-tRNA(Asn) or Glu-tRNA(Gln) in organisms which lack either or both of asparaginyl-tRNA or glutaminyl-tRNA synthetases. The reaction takes place in the presence of glutamine and ATP through an activated phospho-Asp-tRNA(Asn) or phospho-Glu-tRNA(Gln). The protein is Aspartyl/glutamyl-tRNA(Asn/Gln) amidotransferase subunit C of Pelagibacter ubique (strain HTCC1062).